The following is a 124-amino-acid chain: MIKLKFGVFFTVLLSSAYAHGTPQNITDLCAEYHNTQIYTLNDKIFSYTESLAGKREMAIITFKNGAIFQVEVPGSQHIDSQKKAIERMKDTLRIAYLTEAKVEKLCVWNNKTPHAIAAISMAN.

The N-terminal stretch at 1-21 (MIKLKFGVFFTVLLSSAYAHG) is a signal peptide. A disulfide bridge links Cys-30 with Cys-107.

As to quaternary structure, the holotoxin (choleragen) consists of a pentameric ring of B subunits whose central pore is occupied by the A subunit. The A subunit contains two chains, A1 and A2, linked by a disulfide bridge.

It localises to the secreted. Its subcellular location is the host cell membrane. The B subunit pentameric ring directs the A subunit to its target by binding to the GM1 gangliosides present on the surface of the intestinal epithelial cells. It can bind five GM1 gangliosides. It has no toxic activity by itself. This chain is Cholera enterotoxin subunit B (ctxB), found in Vibrio cholerae serotype O1 (strain ATCC 39315 / El Tor Inaba N16961).